A 142-amino-acid polypeptide reads, in one-letter code: Large ribosomal subunit protein uL11 (142 aa).

The protein belongs to the universal ribosomal protein uL11 family. In terms of assembly, part of the ribosomal stalk of the 50S ribosomal subunit. Interacts with L10 and the large rRNA to form the base of the stalk. L10 forms an elongated spine to which L12 dimers bind in a sequential fashion forming a multimeric L10(L12)X complex. Post-translationally, one or more lysine residues are methylated.

In terms of biological role, forms part of the ribosomal stalk which helps the ribosome interact with GTP-bound translation factors. In Mycobacterium tuberculosis (strain ATCC 25177 / H37Ra), this protein is Large ribosomal subunit protein uL11.